The following is a 436-amino-acid chain: GTPase Der (436 aa).

2 consecutive EngA-type G domains span residues 4 to 167 (PVVA…PKGG) and 176 to 351 (IKFC…DNHA). GTP-binding positions include 10 to 17 (GRPNVGKS), 57 to 61 (DTGGI), 119 to 122 (NKID), 182 to 189 (GRPNVGKS), 229 to 233 (DTAGM), and 294 to 297 (NKWD). The KH-like domain occupies 352–436 (MRVQTNVLNE…PIKIIARPRK (85 aa)).

The protein belongs to the TRAFAC class TrmE-Era-EngA-EngB-Septin-like GTPase superfamily. EngA (Der) GTPase family. Associates with the 50S ribosomal subunit.

In terms of biological role, GTPase that plays an essential role in the late steps of ribosome biogenesis. The protein is GTPase Der of Geobacillus kaustophilus (strain HTA426).